A 331-amino-acid polypeptide reads, in one-letter code: Thiamine thiazole synthase (331 aa).

Substrate-binding positions include Cys86, 107 to 108, Gly115, and Val183; that span reads EA. The residue at position 220 (Cys220) is a 2,3-didehydroalanine (Cys). Substrate contacts are provided by residues Asp222, His237, Met289, and 299 to 301; that span reads RMG.

Belongs to the THI4 family. In terms of assembly, homooctamer. Requires Fe cation as cofactor. Post-translationally, during the catalytic reaction, a sulfide is transferred from Cys-220 to a reaction intermediate, generating a dehydroalanine residue.

The protein resides in the cytoplasm. Its subcellular location is the nucleus. It catalyses the reaction [ADP-thiazole synthase]-L-cysteine + glycine + NAD(+) = [ADP-thiazole synthase]-dehydroalanine + ADP-5-ethyl-4-methylthiazole-2-carboxylate + nicotinamide + 3 H2O + 2 H(+). Involved in biosynthesis of the thiamine precursor thiazole. Catalyzes the conversion of NAD and glycine to adenosine diphosphate 5-(2-hydroxyethyl)-4-methylthiazole-2-carboxylic acid (ADT), an adenylated thiazole intermediate. The reaction includes an iron-dependent sulfide transfer from a conserved cysteine residue of the protein to a thiazole intermediate. The enzyme can only undergo a single turnover, which suggests it is a suicide enzyme. May have additional roles in adaptation to various stress conditions and in DNA damage tolerance. This is Thiamine thiazole synthase from Emericella nidulans (strain FGSC A4 / ATCC 38163 / CBS 112.46 / NRRL 194 / M139) (Aspergillus nidulans).